The chain runs to 247 residues: Adenosylcobinamide-GDP ribazoletransferase (247 aa).

A run of 6 helical transmembrane segments spans residues 31-51 (ILFY…VTCI), 55-75 (LPAL…TGGL), 109-129 (IGVL…YVLI), 135-155 (LFLI…FLTT), 183-203 (VLLL…SFLI), and 227-247 (AIEI…FYLV).

The protein belongs to the CobS family. It depends on Mg(2+) as a cofactor.

Its subcellular location is the cell inner membrane. It carries out the reaction alpha-ribazole + adenosylcob(III)inamide-GDP = adenosylcob(III)alamin + GMP + H(+). The enzyme catalyses alpha-ribazole 5'-phosphate + adenosylcob(III)inamide-GDP = adenosylcob(III)alamin 5'-phosphate + GMP + H(+). The protein operates within cofactor biosynthesis; adenosylcobalamin biosynthesis; adenosylcobalamin from cob(II)yrinate a,c-diamide: step 7/7. In terms of biological role, joins adenosylcobinamide-GDP and alpha-ribazole to generate adenosylcobalamin (Ado-cobalamin). Also synthesizes adenosylcobalamin 5'-phosphate from adenosylcobinamide-GDP and alpha-ribazole 5'-phosphate. The protein is Adenosylcobinamide-GDP ribazoletransferase of Acinetobacter baumannii (strain ACICU).